The primary structure comprises 357 residues: DNA integrity scanning protein DisA (357 aa).

The DAC domain maps to 8–148 (PQELIEKIKL…NYKYVVNQVD (141 aa)). 3',3'-c-di-AMP is bound by residues Gly76, Leu94, Thr107, Thr111, and Arg128.

This sequence belongs to the DisA family. As to quaternary structure, homooctamer. Mg(2+) is required as a cofactor.

The catalysed reaction is 2 ATP = 3',3'-c-di-AMP + 2 diphosphate. Inhibited by 3'-dATP. In terms of biological role, participates in a DNA-damage check-point. DisA forms globular foci that rapidly scan along the chromosomes searching for lesions. Has diadenylate cyclase activity, catalyzing the condensation of 2 ATP molecules into cyclic di-AMP (c-di-AMP). c-di-AMP likely acts as a signaling molecule that may couple DNA integrity with a cellular process. This rate-limiting step is the accessibility of the active site; mutating the possible exit tunnel (residues 128-130) increases product 2-fold despite Arg-130 being important for ATP-binding. Does not convert GTP to c-di-GMP. In Thermotoga maritima (strain ATCC 43589 / DSM 3109 / JCM 10099 / NBRC 100826 / MSB8), this protein is DNA integrity scanning protein DisA.